A 288-amino-acid chain; its full sequence is Protein sprouty homolog 3 (288 aa).

The region spanning 154–267 (KCVPCTAVRP…PGCRCKRHTN (114 aa)) is the SPR domain.

It belongs to the sprouty family. In terms of assembly, interacts with TESK1. Interacts with USP11. Interacts with CAV1 (via C-terminus). In terms of tissue distribution, expressed in the brain with expression the highest in Purkinje cell bodies and projections in the cerebellum (at protein level). Also expressed in central and peripheral nervous system ganglion cells, superior cervical ganglion and dorsal root ganglion (at protein level). Expressed in the retinal ganglion cell layer and the inner nuclear layer (at protein level).

The protein resides in the cytoplasm. Its function is as follows. Inhibits neurite branching, arbor length and neurite complexity. Inhibits EGF-mediated p42/44 ERK signaling. Negatively regulates the MAPK cascade, resulting in a reduction of extracellular matrix protein accumulation. May function as an antagonist of fibroblast growth factor (FGF) pathways and may negatively modulate respiratory organogenesis. The polypeptide is Protein sprouty homolog 3 (Mus musculus (Mouse)).